The following is a 651-amino-acid chain: DNA mismatch repair protein MutL (651 aa).

It belongs to the DNA mismatch repair MutL/HexB family.

In terms of biological role, this protein is involved in the repair of mismatches in DNA. It is required for dam-dependent methyl-directed DNA mismatch repair. May act as a 'molecular matchmaker', a protein that promotes the formation of a stable complex between two or more DNA-binding proteins in an ATP-dependent manner without itself being part of a final effector complex. In Streptococcus mutans serotype c (strain ATCC 700610 / UA159), this protein is DNA mismatch repair protein MutL.